We begin with the raw amino-acid sequence, 155 residues long: SsrA-binding protein (155 aa).

The interval 136 to 155 (RESLKRRQDQRDMQRAMKNY) is disordered.

The protein belongs to the SmpB family.

The protein resides in the cytoplasm. Its function is as follows. Required for rescue of stalled ribosomes mediated by trans-translation. Binds to transfer-messenger RNA (tmRNA), required for stable association of tmRNA with ribosomes. tmRNA and SmpB together mimic tRNA shape, replacing the anticodon stem-loop with SmpB. tmRNA is encoded by the ssrA gene; the 2 termini fold to resemble tRNA(Ala) and it encodes a 'tag peptide', a short internal open reading frame. During trans-translation Ala-aminoacylated tmRNA acts like a tRNA, entering the A-site of stalled ribosomes, displacing the stalled mRNA. The ribosome then switches to translate the ORF on the tmRNA; the nascent peptide is terminated with the 'tag peptide' encoded by the tmRNA and targeted for degradation. The ribosome is freed to recommence translation, which seems to be the essential function of trans-translation. This Nostoc sp. (strain PCC 7120 / SAG 25.82 / UTEX 2576) protein is SsrA-binding protein.